A 387-amino-acid chain; its full sequence is EARP-interacting protein homolog (387 aa).

WD repeat units lie at residues 132–172 (SAHG…AKAT), 182–222 (KGQL…QIYC), 226–266 (AHGQ…EPVK), and 270–310 (EHSH…SEPF). The segment at 309 to 337 (PFGHLVDDDDLSDPEENQQEDKGKEPLQD) is disordered. Acidic residues predominate over residues 315-326 (DDDDLSDPEENQ). Residues 345–385 (EHEDSVYAVEWSAADPWLFASLSYDGRLVINRVPRALKYRI) form a WD 5 repeat.

It belongs to the WD repeat EIPR1 family.

The protein localises to the golgi apparatus. It localises to the trans-Golgi network. In terms of biological role, may act as a component of endosomal retrieval machinery that is involved in protein transport from early endosomes to either recycling endosomes or the trans-Golgi network. This Danio rerio (Zebrafish) protein is EARP-interacting protein homolog.